We begin with the raw amino-acid sequence, 255 residues long: Segregation and condensation protein A (255 aa).

It belongs to the ScpA family. As to quaternary structure, component of a cohesin-like complex composed of ScpA, ScpB and the Smc homodimer, in which ScpA and ScpB bind to the head domain of Smc. The presence of the three proteins is required for the association of the complex with DNA.

It is found in the cytoplasm. In terms of biological role, participates in chromosomal partition during cell division. May act via the formation of a condensin-like complex containing Smc and ScpB that pull DNA away from mid-cell into both cell halves. In Lactiplantibacillus plantarum (strain ATCC BAA-793 / NCIMB 8826 / WCFS1) (Lactobacillus plantarum), this protein is Segregation and condensation protein A.